The sequence spans 346 residues: Cyclin-dependent kinase 20 (346 aa).

The Protein kinase domain maps to tyrosine 4–phenylalanine 288. ATP contacts are provided by residues isoleucine 10–valine 18 and lysine 33. The active-site Proton acceptor is the aspartate 127.

This sequence belongs to the protein kinase superfamily. CMGC Ser/Thr protein kinase family. CDC2/CDKX subfamily. In terms of assembly, monomer. Interacts with TBC1D32 and MAK.

Its subcellular location is the nucleus. The protein resides in the cytoplasm. It is found in the cell projection. It localises to the cilium. The catalysed reaction is L-seryl-[protein] + ATP = O-phospho-L-seryl-[protein] + ADP + H(+). It catalyses the reaction L-threonyl-[protein] + ATP = O-phospho-L-threonyl-[protein] + ADP + H(+). Its function is as follows. Required for high-level Shh responses in the developing neural tube. Together with TBC1D32, controls the structure of the primary cilium by coordinating assembly of the ciliary membrane and axoneme, allowing GLI2 to be properly activated in response to SHH signaling. Involved in cell growth. Activates CDK2, a kinase involved in the control of the cell cycle, by phosphorylating residue 'Thr-160'. The chain is Cyclin-dependent kinase 20 (CDK20) from Pongo abelii (Sumatran orangutan).